The primary structure comprises 88 residues: Putative regulatory protein PCC7424_3427 (88 aa).

It belongs to the RemA family.

The polypeptide is Putative regulatory protein PCC7424_3427 (Gloeothece citriformis (strain PCC 7424) (Cyanothece sp. (strain PCC 7424))).